Consider the following 183-residue polypeptide: Putative manganese efflux pump MntP (183 aa).

Transmembrane regions (helical) follow at residues 3-23 (TISV…LSIY), 43-63 (TFGI…ILFI), 66-86 (ISLY…LMML), 107-127 (LIIM…TFSI), 134-154 (FLYT…GFIL), and 161-181 (ILGQ…SINI).

This sequence belongs to the MntP (TC 9.B.29) family.

Its subcellular location is the cell inner membrane. Probably functions as a manganese efflux pump. The chain is Putative manganese efflux pump MntP from Fusobacterium nucleatum subsp. nucleatum (strain ATCC 25586 / DSM 15643 / BCRC 10681 / CIP 101130 / JCM 8532 / KCTC 2640 / LMG 13131 / VPI 4355).